The primary structure comprises 134 residues: UPF0102 protein Rmet_3430 (134 aa).

Belongs to the UPF0102 family.

This Cupriavidus metallidurans (strain ATCC 43123 / DSM 2839 / NBRC 102507 / CH34) (Ralstonia metallidurans) protein is UPF0102 protein Rmet_3430.